The sequence spans 559 residues: Urocanate hydratase (559 aa).

NAD(+)-binding positions include 50-51 (GG), Q128, 174-176 (GMG), D194, R199, 240-241 (NA), 261-265 (QTSAH), 271-272 (YI), and Y320. C408 is an active-site residue. An NAD(+)-binding site is contributed by G490.

This sequence belongs to the urocanase family. It depends on NAD(+) as a cofactor.

The protein resides in the cytoplasm. It carries out the reaction 4-imidazolone-5-propanoate = trans-urocanate + H2O. The protein operates within amino-acid degradation; L-histidine degradation into L-glutamate; N-formimidoyl-L-glutamate from L-histidine: step 2/3. Functionally, catalyzes the conversion of urocanate to 4-imidazolone-5-propionate. In Halalkalibacterium halodurans (strain ATCC BAA-125 / DSM 18197 / FERM 7344 / JCM 9153 / C-125) (Bacillus halodurans), this protein is Urocanate hydratase.